Consider the following 174-residue polypeptide: Cytochrome c oxidase subunit 5A, mitochondrial (174 aa).

A mitochondrion-targeting transit peptide spans Met-1–Ser-29.

Belongs to the cytochrome c oxidase subunit 5A family. Component of the cytochrome c oxidase (complex IV, CIV), a multisubunit enzyme composed of a catalytic core of 3 subunits and several supernumerary subunits. The complex exists as a monomer or a dimer and forms supercomplexes (SCs) in the inner mitochondrial membrane with ubiquinol-cytochrome c oxidoreductase (cytochrome b-c1 complex, complex III, CIII).

The protein resides in the mitochondrion inner membrane. It participates in energy metabolism; oxidative phosphorylation. In terms of biological role, component of the cytochrome c oxidase, the last enzyme in the mitochondrial electron transport chain which drives oxidative phosphorylation. The respiratory chain contains 3 multisubunit complexes succinate dehydrogenase (complex II, CII), ubiquinol-cytochrome c oxidoreductase (cytochrome b-c1 complex, complex III, CIII) and cytochrome c oxidase (complex IV, CIV), that cooperate to transfer electrons derived from NADH and succinate to molecular oxygen, creating an electrochemical gradient over the inner membrane that drives transmembrane transport and the ATP synthase. Cytochrome c oxidase is the component of the respiratory chain that catalyzes the reduction of oxygen to water. Electrons originating from reduced cytochrome c in the intermembrane space (IMS) are transferred via the dinuclear copper A center (CU(A)) of subunit 2 and heme A of subunit 1 to the active site in subunit 1, a binuclear center (BNC) formed by heme A3 and copper B (CU(B)). The BNC reduces molecular oxygen to 2 water molecules using 4 electrons from cytochrome c in the IMS and 4 protons from the mitochondrial matrix. This is Cytochrome c oxidase subunit 5A, mitochondrial from Caenorhabditis elegans.